Consider the following 713-residue polypeptide: Leucine-rich repeat-containing protein 4B (713 aa).

The N-terminal stretch at 1–35 (MARARGSPCPPLPPGRMSWPHGALLFLWLFSPPLG) is a signal peptide. Residues 36–576 (AGGGGVAVTS…DLDDVMKTTK (541 aa)) lie on the Extracellular side of the membrane. The LRRNT domain occupies 48-86 (GGGSPPATSCPVACSCSNQASRVICTRRDLAEVPASIPV). LRR repeat units follow at residues 87 to 108 (NTRYLNLQENGIQVIRTDTFKH), 111 to 132 (HLEILQLSKNLVRKIEVGAFNG), 135 to 156 (SLNTLELFDNRLTTVPTQAFEY), 159 to 180 (KLRELWLRNNPIESIPSYAFNR), 183 to 205 (SLRRLDLGELKRLEYISEAAFEG), 208 to 229 (NLRYLNLGMCNLKDIPNLTALV), 230 to 251 (RLEELELSGNRLDLIRPGSFQG), 254 to 275 (SLRKLWLMHAQVATIERNAFDD), and 278 to 299 (SLEELNLSHNNLMSLPHDLFTP). N-linked (GlcNAc...) asparagine glycosylation is present at N224. N-linked (GlcNAc...) asparagine glycosylation is found at N283, N333, N374, N400, N422, N425, N444, and N452. Residues 311-363 (NPWHCNCDVLWLSWWLKETVPSNTTCCARCHAPAGLKGRYIGELDQSHFTCYA) enclose the LRRCT domain. The Ig-like C2-type domain maps to 364–452 (PVIVEPPTDL…GNTTASATLN (89 aa)). A disulfide bridge links C385 with C436. The tract at residues 497 to 551 (TQPGEEALQPRGTEKEPPGPTTDGVWGGGRPGDAAGPASSSTTAPAPRSSRPTEK) is disordered. Residues 528–546 (GDAAGPASSSTTAPAPRSS) are compositionally biased toward low complexity. The chain crosses the membrane as a helical span at residues 577–597 (IIIGCFVAITFMAAVMLVAFY). Topologically, residues 598 to 713 (KLRKQHQLHK…SKENVQETQI (116 aa)) are cytoplasmic. Phosphoserine is present on S693. A disordered region spans residues 694–713 (IHEPLLFKSGSKENVQETQI). The span at 703–713 (GSKENVQETQI) shows a compositional bias: basic and acidic residues.

As to quaternary structure, interacts with PTPRF. Interacts with DLG4. N-glycosylated. O-glycosylated; contains sialic acid.

It localises to the membrane. The protein resides in the presynaptic cell membrane. In terms of biological role, synaptic adhesion protein. Regulates the formation of excitatory synapses. The trans-synaptic adhesion between LRRC4B and PTPRF regulates the formation of excitatory synapses in a bidirectional manner. This Homo sapiens (Human) protein is Leucine-rich repeat-containing protein 4B (LRRC4B).